Reading from the N-terminus, the 647-residue chain is Threonine--tRNA ligase (647 aa).

A TGS domain is found at 1–61; the sequence is MINITFPDGA…TEDGSIEIVT (61 aa). The tract at residues 242–540 is catalytic; sequence DHRKLGKELD…LIENYKGAFP (299 aa). The Zn(2+) site is built by Cys-336, His-387, and His-517.

This sequence belongs to the class-II aminoacyl-tRNA synthetase family. As to quaternary structure, homodimer. It depends on Zn(2+) as a cofactor.

It localises to the cytoplasm. It catalyses the reaction tRNA(Thr) + L-threonine + ATP = L-threonyl-tRNA(Thr) + AMP + diphosphate + H(+). Its function is as follows. Catalyzes the attachment of threonine to tRNA(Thr) in a two-step reaction: L-threonine is first activated by ATP to form Thr-AMP and then transferred to the acceptor end of tRNA(Thr). Also edits incorrectly charged L-seryl-tRNA(Thr). This Streptococcus pneumoniae (strain ATCC 700669 / Spain 23F-1) protein is Threonine--tRNA ligase.